The sequence spans 421 residues: 3-phosphoshikimate 1-carboxyvinyltransferase (421 aa).

Residues Lys-20, Ser-21, and Arg-25 each coordinate 3-phosphoshikimate. Lys-20 contributes to the phosphoenolpyruvate binding site. Phosphoenolpyruvate contacts are provided by Gly-90 and Arg-117. 3-phosphoshikimate is bound by residues Ser-162, Ser-163, Gln-164, Ser-190, Asp-304, and Lys-331. Gln-164 provides a ligand contact to phosphoenolpyruvate. The active-site Proton acceptor is the Asp-304. Arg-335 and Arg-376 together coordinate phosphoenolpyruvate.

The protein belongs to the EPSP synthase family. Monomer.

The protein localises to the cytoplasm. The enzyme catalyses 3-phosphoshikimate + phosphoenolpyruvate = 5-O-(1-carboxyvinyl)-3-phosphoshikimate + phosphate. The protein operates within metabolic intermediate biosynthesis; chorismate biosynthesis. In terms of biological role, catalyzes the transfer of the enolpyruvyl moiety of phosphoenolpyruvate (PEP) to the 5-hydroxyl of shikimate-3-phosphate (S3P) to produce enolpyruvyl shikimate-3-phosphate and inorganic phosphate. In Methanothrix thermoacetophila (strain DSM 6194 / JCM 14653 / NBRC 101360 / PT) (Methanosaeta thermophila), this protein is 3-phosphoshikimate 1-carboxyvinyltransferase.